Reading from the N-terminus, the 541-residue chain is Phenazine N-monooxygenase PhzNO1 (541 aa).

FAD is bound by residues D39, T47–W50, D59–T60, Y65, and I112. R57–D59 contacts NADP(+). NADP(+) is bound by residues T186 to Q192, R209 to S210, and W492.

Belongs to the FAD-binding monooxygenase family. The cofactor is FAD.

The catalysed reaction is 1,6-dihydroxyphenazine + NADPH + O2 = 1,6-dihydroxyphenazine N(5)-oxide + NADP(+) + H2O. It carries out the reaction 1,6-dihydroxyphenazine N(5)-oxide + NADPH + O2 = 1,6-dihydroxyphenazine N(5),N(10)-dioxide + NADP(+) + H2O. The enzyme catalyses 1-hydroxy-6-methoxyphenazine + NADPH + O2 = 1-hydroxy-6-methoxyphenazine N(10)-oxide + NADP(+) + H2O. It catalyses the reaction quinolin-8-ol + NADPH + O2 = 8-hydroxyquinoline N-oxide + NADP(+) + H2O. Involved in the biosynthesis of phenazine natural products including myxin, an N(5),N(10)-dioxide phenazine antiobiotic, which has antimicrobial activity. Catalyzes the aromatic N-oxidations of phenazines, such as 1,6-dihydroxyphenazine (DHP), 1,6-dihydroxyphenazine N(5)-oxide (DHPO) and 1-hydroxy-6-methoxyphenazine to produce DHPO, iodinin (1,6-dihydroxyphenazine N(5),N(10)-dioxide) and 1-hydroxy-6-methoxyphenazine N(10)-oxide, respectively. Also catalyzes the N-oxidation of 8-hydroxyquinoline, but not 6-hydroxyquinoline (6-HQ), quinoline, quinoxaline, quinine and 2-phenylpyridine. This is Phenazine N-monooxygenase PhzNO1 from Lysobacter antibioticus.